The sequence spans 81 residues: Costars family protein ABRACL (81 aa).

Met1 is subject to N-acetylmethionine.

Belongs to the costars family.

The polypeptide is Costars family protein ABRACL (Abracl) (Mus musculus (Mouse)).